A 347-amino-acid polypeptide reads, in one-letter code: Holliday junction branch migration complex subunit RuvB (347 aa).

Positions 1–181 are large ATPase domain (RuvB-L); the sequence is MTRNSLLNPE…FGIPVRLQFY (181 aa). Residues Leu20, Arg21, Gly62, Lys65, Thr66, Thr67, Arg171, Tyr181, and Arg218 each contribute to the ATP site. Thr66 serves as a coordination point for Mg(2+). Residues 182-252 form a small ATPAse domain (RuvB-S) region; it reads SIEELRQVIT…IADEALNRLE (71 aa). Residues 255–347 form a head domain (RuvB-H) region; that stretch reads KLGLDLMDRR…SEIKNQPGLL (93 aa). DNA contacts are provided by Arg291, Arg310, and Arg315.

Belongs to the RuvB family. In terms of assembly, homohexamer. Forms an RuvA(8)-RuvB(12)-Holliday junction (HJ) complex. HJ DNA is sandwiched between 2 RuvA tetramers; dsDNA enters through RuvA and exits via RuvB. An RuvB hexamer assembles on each DNA strand where it exits the tetramer. Each RuvB hexamer is contacted by two RuvA subunits (via domain III) on 2 adjacent RuvB subunits; this complex drives branch migration. In the full resolvosome a probable DNA-RuvA(4)-RuvB(12)-RuvC(2) complex forms which resolves the HJ.

It localises to the cytoplasm. The enzyme catalyses ATP + H2O = ADP + phosphate + H(+). In terms of biological role, the RuvA-RuvB-RuvC complex processes Holliday junction (HJ) DNA during genetic recombination and DNA repair, while the RuvA-RuvB complex plays an important role in the rescue of blocked DNA replication forks via replication fork reversal (RFR). RuvA specifically binds to HJ cruciform DNA, conferring on it an open structure. The RuvB hexamer acts as an ATP-dependent pump, pulling dsDNA into and through the RuvAB complex. RuvB forms 2 homohexamers on either side of HJ DNA bound by 1 or 2 RuvA tetramers; 4 subunits per hexamer contact DNA at a time. Coordinated motions by a converter formed by DNA-disengaged RuvB subunits stimulates ATP hydrolysis and nucleotide exchange. Immobilization of the converter enables RuvB to convert the ATP-contained energy into a lever motion, pulling 2 nucleotides of DNA out of the RuvA tetramer per ATP hydrolyzed, thus driving DNA branch migration. The RuvB motors rotate together with the DNA substrate, which together with the progressing nucleotide cycle form the mechanistic basis for DNA recombination by continuous HJ branch migration. Branch migration allows RuvC to scan DNA until it finds its consensus sequence, where it cleaves and resolves cruciform DNA. This chain is Holliday junction branch migration complex subunit RuvB, found in Zymomonas mobilis subsp. mobilis (strain ATCC 31821 / ZM4 / CP4).